Reading from the N-terminus, the 455-residue chain is Zinc finger and BTB domain-containing protein 8A.2 (455 aa).

The 69-residue stretch at 24–92 (CDCHIMIDGH…MYSGKLNLSG (69 aa)) folds into the BTB domain. 2 C2H2-type zinc fingers span residues 299-321 (FKCP…LLCH) and 327-350 (YPCQ…RTIH).

The protein resides in the nucleus. Functionally, may be involved in transcriptional regulation. In Xenopus tropicalis (Western clawed frog), this protein is Zinc finger and BTB domain-containing protein 8A.2 (zbtb8a.2).